The following is a 367-amino-acid chain: Probable sugar phosphate/phosphate translocator At1g48230 (367 aa).

10 helical membrane passes run 9–29 (LVLTYIYLLIYIILSSGVILY), 43–63 (LPITLTMIHMGFSGFVAFLLI), 76–96 (FEIYVTCVVPISAFFASSLWF), 106–126 (VAFIQMLKALMPVATFLMAVV), 140–160 (MVLVSVGVVVSSYGEINFNVI), 163–183 (VYQVMGIFAEALRLVLTQVLL), 193–213 (VTSLYYIAPCSFVFLSLPWYV), 229–249 (WIFFSNALCALALNFSIFLVI), 257–276 (IRVAGVLKDWILIALSTVIF), and 280–302 (TITGLNITGYAIALCGVVMYNYI). The span at 321-330 (ITKDWKEKNS) shows a compositional bias: basic and acidic residues. The interval 321-341 (ITKDWKEKNSSDGGSPRGLEL) is disordered.

The protein belongs to the TPT transporter family. TPT (TC 2.A.7.9) subfamily.

The protein resides in the membrane. The sequence is that of Probable sugar phosphate/phosphate translocator At1g48230 from Arabidopsis thaliana (Mouse-ear cress).